We begin with the raw amino-acid sequence, 876 residues long: Valine--tRNA ligase (876 aa).

Residues 44 to 54 (PNVTGKLHLGH) carry the 'HIGH' region motif. Positions 520–524 (KMSKS) match the 'KMSKS' region motif. An ATP-binding site is contributed by K523. Residues 805–876 (LEGLIDMDKE…VKARIEQLKA (72 aa)) are a coiled coil.

Belongs to the class-I aminoacyl-tRNA synthetase family. ValS type 1 subfamily. In terms of assembly, monomer.

It is found in the cytoplasm. It carries out the reaction tRNA(Val) + L-valine + ATP = L-valyl-tRNA(Val) + AMP + diphosphate. Its function is as follows. Catalyzes the attachment of valine to tRNA(Val). As ValRS can inadvertently accommodate and process structurally similar amino acids such as threonine, to avoid such errors, it has a 'posttransfer' editing activity that hydrolyzes mischarged Thr-tRNA(Val) in a tRNA-dependent manner. The polypeptide is Valine--tRNA ligase (Staphylococcus carnosus (strain TM300)).